We begin with the raw amino-acid sequence, 247 residues long: ATP synthase subunit a (247 aa).

6 helical membrane-spanning segments follow: residues 26–46 (ITNN…LFYV), 85–105 (YFPL…IGLL), 115–135 (IIFT…INFF), 141–161 (FFNL…LVVI), 178–198 (FANM…IFNV), and 205–225 (ISFL…CIAI).

Belongs to the ATPase A chain family. F-type ATPases have 2 components, CF(1) - the catalytic core - and CF(0) - the membrane proton channel. CF(1) has five subunits: alpha(3), beta(3), gamma(1), delta(1), epsilon(1). CF(0) has three main subunits: a, b and c.

Its subcellular location is the mitochondrion inner membrane. Its function is as follows. Mitochondrial membrane ATP synthase (F(1)F(0) ATP synthase or Complex V) produces ATP from ADP in the presence of a proton gradient across the membrane which is generated by electron transport complexes of the respiratory chain. F-type ATPases consist of two structural domains, F(1) - containing the extramembraneous catalytic core and F(0) - containing the membrane proton channel, linked together by a central stalk and a peripheral stalk. During catalysis, ATP synthesis in the catalytic domain of F(1) is coupled via a rotary mechanism of the central stalk subunits to proton translocation. Key component of the proton channel; it may play a direct role in the translocation of protons across the membrane. The polypeptide is ATP synthase subunit a (ATP6) (Acanthamoeba castellanii (Amoeba)).